Consider the following 33-residue polypeptide: uncharacterized protein (33 aa).

The Cytoplasmic segment spans residues 1–12; that stretch reads MKENKVQQISHK. A helical transmembrane segment spans residues 13–33; sequence LINIVVFVAIVEYAYLFLHFY.

It localises to the cell inner membrane. This is an uncharacterized protein from Escherichia coli (strain K12).